A 424-amino-acid polypeptide reads, in one-letter code: MLDLKFILNNKNEVIKKLSTRNYDLANITKINNLGEMRSKLIFELEKLQAKRNKLSDEIGIKKRNNENCDSLIEEVNAIKAQIEKVDHEADDIISQVNDILTKIPNLPYDDVPVGSDELDNKVIKEHASLGRGLVKGVEAHYDIATKLDIIDFTRAVKLAQTRFVLYKNAGAKLIRALANFMLDTHINNGYKEIMPAHLVNSKMLFGTGQLPKFKDDLFRVSDSDLWLIPTAEVPLTNYHYDEILNLNEPIKYVAYTKCFRSEAGSGGRDTRGIIRQHEFHKVELVKIVRQEDAMGEWEKMVNDAKNILTLLELPYREILLCTGDMGFSSAKTIDLEIWIPSEQRYRETSSISICKDFQARRAKIRYKDADGKTKYAFTMNGSGVAIDRVMAAILENYQNSDGTITVPKVLVPYMNGITKIEAK.

An L-serine-binding site is contributed by 231-233 (TAE). 261 to 263 (RSE) serves as a coordination point for ATP. L-serine is bound at residue glutamate 284. 348 to 351 (ETSS) contributes to the ATP binding site. Residue serine 383 participates in L-serine binding.

It belongs to the class-II aminoacyl-tRNA synthetase family. Type-1 seryl-tRNA synthetase subfamily. In terms of assembly, homodimer. The tRNA molecule binds across the dimer.

The protein localises to the cytoplasm. The enzyme catalyses tRNA(Ser) + L-serine + ATP = L-seryl-tRNA(Ser) + AMP + diphosphate + H(+). It carries out the reaction tRNA(Sec) + L-serine + ATP = L-seryl-tRNA(Sec) + AMP + diphosphate + H(+). It participates in aminoacyl-tRNA biosynthesis; selenocysteinyl-tRNA(Sec) biosynthesis; L-seryl-tRNA(Sec) from L-serine and tRNA(Sec): step 1/1. Its function is as follows. Catalyzes the attachment of serine to tRNA(Ser). Is also able to aminoacylate tRNA(Sec) with serine, to form the misacylated tRNA L-seryl-tRNA(Sec), which will be further converted into selenocysteinyl-tRNA(Sec). In Metamycoplasma arthritidis (strain 158L3-1) (Mycoplasma arthritidis), this protein is Serine--tRNA ligase.